An 819-amino-acid chain; its full sequence is Plastid division protein CDP1, chloroplastic (819 aa).

A chloroplast-targeting transit peptide spans 1–76 (MPVAYTFPVL…NAAGGGIHVV (76 aa)). Residues 77-572 (DNAPSRTSSL…NKIWDEWLSQ (496 aa)) are Stromal-facing. Residues 419-439 (EAEALEKLKQLESNSDSAVRN) are a coiled coil. Residues 573–593 (SSLIGRVSVVALLGCTVFFSL) traverse the membrane as a helical segment. Topologically, residues 594–819 (KLSGIRSGRL…FCQSDIQIQK (226 aa)) are chloroplast intermembrane. Positions 762–782 (IAGEAAEIEALLEEAAELVDE) form a coiled coil.

In terms of assembly, self-interacts. Interacts (via N-terminus) with ARC3 (via MORN domains). Binds (via N-terminus) to FTSZ2 proteins, FTSZ2-1 and FTSZ2-2. Recruited ARC3 to the middle of the plastid where subsequent complex made of CDP1/PARC6, ARC3 and FtsZ proteins can form; this complex enhances the dynamics of Z rings during chloroplast division. Interacts (via C-terminus) with PDV1 (via C-terminus). Interacts with MIND1. As to expression, exclusively expressed in young green tissues such as young cotyledons, shoot apex, emerging leaves and budding inflorescence.

It localises to the plastid. The protein resides in the chloroplast inner membrane. In terms of biological role, component of the plastid division machinery required for PDV1 localization to constriction sites. Involved in chloroplast division site placement. Required for the proper formation of FtsZ rings at the division site in nongreen plastids (e.g. etioplasts). Inhibits FtsZ assembly, functioning as an antagonistic regulator of FtsZ dynamics against ARC6, by recruiting ARC3 to the middle of the plastid to facilitate its interaction with FtsZ proteins. Required during stromule biogenesis in the leaf epidermis, especially in non-mesophyll cells plastids. The polypeptide is Plastid division protein CDP1, chloroplastic (Arabidopsis thaliana (Mouse-ear cress)).